A 663-amino-acid polypeptide reads, in one-letter code: MIWNWLRKKKKSNTSKLNETDNQEQHSNNQEDDNKEQTRSMKHNKGKNNEQKDSSQDKQQSAKQGDSSQDKQQNPKQEDSSQDKQQNPKQGDSSQDKQQSAKQKDPSQDKQQNPKQEDSSQDKQQSAKQGDSSQDKQQSAKQGDSSQDKQQNAKQDEPSQSKQQSSGGNSIYDFTKPEKDRIHSLQNLIEKLKKSSDFVNYHTSDDETMPYWISYYRPSLDGEKLQKYLMPTLLERPNASLEELKEHIPMSGITITNDLQKIEDMVLKGHAIIQLNQQDQKCMLANIAIDNYRAPTPPLNESTVIGPQEGFVEDIDTNINLVRKRLPVLDLQTKEMIIGEFSKTKVVMMYLDNLAEKDNVDFLEESLRALEYDQINDSAYLQELMGEKSIFPLYINTERTDRVTKALIDGKIAIFVDGSPSVLLTPVSYFDFFISPEDYNVSWMYATFSRILRLIAVLFSICATPLYVAVLNYHYELIPSDLLETLILSRAQVPFPPLIEALFLELAIDLLREAGARLPMKVGQTLGIVGGIVIGQASVQAGLTSNILLIIVALSALASFITPIYKMGNAVRLLRFPFLAFAEIGGLFGISLGFIFLFTHLFRLTSLRKPYALFYPTRQQSVKDSWIRFPLTMIDTRDVQARPQHVKKAAKGISTKHRSDFDD.

Basic residues predominate over residues 1 to 13; the sequence is MIWNWLRKKKKSN. Positions 1-175 are disordered; it reads MIWNWLRKKK…SGGNSIYDFT (175 aa). A compositionally biased stretch (basic and acidic residues) spans 47 to 56; the sequence is KNNEQKDSSQ. Low complexity-rich tracts occupy residues 57-72, 88-101, and 122-150; these read DKQQ…QDKQ and PKQG…QQSA. The next 5 membrane-spanning stretches (helical) occupy residues 414-434, 451-471, 491-511, 541-561, and 578-598; these read IFVD…DFFI, ILRL…VAVL, AQVP…IDLL, AGLT…ASFI, and FLAF…IFLF.

Belongs to the GerABKA family.

It is found in the cell membrane. Functionally, required for inosine germination. The polypeptide is Spore germination protein GerIA (gerIA) (Bacillus cereus).